The sequence spans 261 residues: MRRTVKDFRNAKGQRLVYLTAYDYPTARLAEAAGVDAILVGDSLGMVVLGYPSTVPVTLEEMLHHTKAARRGAPETFLVADLPYLAYATLDRALLAAERLLKEGGADAVKLEGGEEVAEIVQGLVRAGVPVLGHVGLTPQTASQLGGYKLQGRRPEEAERILKGALALEEAGAYGVVLEMVPARLAKEVTERLSVHTVGIGAGPHTDAQVLVFHDVVGLYGDFKPRFVKRYLEAGRLIQEALSRYAQEVREGVFPGEEHSF.

The Mg(2+) site is built by D42 and D81. 3-methyl-2-oxobutanoate-binding positions include 42-43 (DS), D81, and K110. Residue E112 coordinates Mg(2+). Residue E179 is the Proton acceptor of the active site.

This sequence belongs to the PanB family. As to quaternary structure, homodecamer; pentamer of dimers. The cofactor is Mg(2+).

The protein resides in the cytoplasm. It catalyses the reaction 3-methyl-2-oxobutanoate + (6R)-5,10-methylene-5,6,7,8-tetrahydrofolate + H2O = 2-dehydropantoate + (6S)-5,6,7,8-tetrahydrofolate. It functions in the pathway cofactor biosynthesis; (R)-pantothenate biosynthesis; (R)-pantoate from 3-methyl-2-oxobutanoate: step 1/2. In terms of biological role, catalyzes the reversible reaction in which hydroxymethyl group from 5,10-methylenetetrahydrofolate is transferred onto alpha-ketoisovalerate to form ketopantoate. The sequence is that of 3-methyl-2-oxobutanoate hydroxymethyltransferase from Thermus thermophilus (strain ATCC 27634 / DSM 579 / HB8).